We begin with the raw amino-acid sequence, 314 residues long: DNA-directed RNA polymerase subunit alpha (314 aa).

Residues 1–228 (MIEIEKPRIE…EHLNIFVGLT (228 aa)) form an alpha N-terminal domain (alpha-NTD) region. The tract at residues 245–314 (KEKVLEMSIE…DLGLGLRKED (70 aa)) is alpha C-terminal domain (alpha-CTD).

Belongs to the RNA polymerase alpha chain family. Homodimer. The RNAP catalytic core consists of 2 alpha, 1 beta, 1 beta' and 1 omega subunit. When a sigma factor is associated with the core the holoenzyme is formed, which can initiate transcription.

The catalysed reaction is RNA(n) + a ribonucleoside 5'-triphosphate = RNA(n+1) + diphosphate. Its function is as follows. DNA-dependent RNA polymerase catalyzes the transcription of DNA into RNA using the four ribonucleoside triphosphates as substrates. The chain is DNA-directed RNA polymerase subunit alpha from Staphylococcus haemolyticus (strain JCSC1435).